The primary structure comprises 68 residues: Protein RH1 (68 aa).

This is Protein RH1 from Pantherophis guttatus (Corn snake).